The chain runs to 395 residues: ATP phosphoribosyltransferase regulatory subunit (395 aa).

Belongs to the class-II aminoacyl-tRNA synthetase family. HisZ subfamily. As to quaternary structure, heteromultimer composed of HisG and HisZ subunits.

It is found in the cytoplasm. It participates in amino-acid biosynthesis; L-histidine biosynthesis; L-histidine from 5-phospho-alpha-D-ribose 1-diphosphate: step 1/9. In terms of biological role, required for the first step of histidine biosynthesis. May allow the feedback regulation of ATP phosphoribosyltransferase activity by histidine. The sequence is that of ATP phosphoribosyltransferase regulatory subunit from Ectopseudomonas mendocina (strain ymp) (Pseudomonas mendocina).